A 304-amino-acid chain; its full sequence is Dihydroorotate dehydrogenase B (NAD(+)), catalytic subunit (304 aa).

FMN is bound by residues Ser22 and 46–47 (KA). Substrate is bound by residues Lys46 and 70-74 (NAIGL). Residues Asn100 and Asn128 each coordinate FMN. Asn128 is a substrate binding site. Cys131 functions as the Nucleophile in the catalytic mechanism. The FMN site is built by Lys166 and Ile192. 193–194 (NT) lines the substrate pocket. Residues Gly218, 244 to 245 (GG), and 266 to 267 (GT) contribute to the FMN site.

It belongs to the dihydroorotate dehydrogenase family. Type 1 subfamily. In terms of assembly, heterotetramer of 2 PyrK and 2 PyrD type B subunits. Requires FMN as cofactor.

It localises to the cytoplasm. The enzyme catalyses (S)-dihydroorotate + NAD(+) = orotate + NADH + H(+). Its pathway is pyrimidine metabolism; UMP biosynthesis via de novo pathway; orotate from (S)-dihydroorotate (NAD(+) route): step 1/1. Its function is as follows. Catalyzes the conversion of dihydroorotate to orotate with NAD(+) as electron acceptor. This is Dihydroorotate dehydrogenase B (NAD(+)), catalytic subunit (pyrD) from Fusobacterium nucleatum subsp. nucleatum (strain ATCC 25586 / DSM 15643 / BCRC 10681 / CIP 101130 / JCM 8532 / KCTC 2640 / LMG 13131 / VPI 4355).